The primary structure comprises 447 residues: Pentatricopeptide repeat-containing protein At3g53170 (447 aa).

PPR repeat units follow at residues 93 to 127 (RCKT…GLKP), 128 to 158 (TIDV…MKSV), 164 to 198 (DVFT…GVGC), 199 to 233 (STVT…GDSL), 235 to 269 (DVCT…GVQP), 270 to 304 (DITT…FFSL), 305 to 339 (TTVT…GVKP), 340 to 374 (NSIT…DVVL), 375 to 409 (DTPF…KCKP), and 410 to 444 (DKIT…GENL).

Belongs to the PPR family. P subfamily.

This is Pentatricopeptide repeat-containing protein At3g53170 from Arabidopsis thaliana (Mouse-ear cress).